Reading from the N-terminus, the 77-residue chain is MPPRPLDVLNRSLKSPVIVRLKGGREFRGTLDGYDIHMNLVLLDAEEIQNGEVVRKVGSVVIRGDTVVFVSPAPGGE.

In terms of domain architecture, Sm spans 4–76 (RPLDVLNRSL…VVFVSPAPGG (73 aa)).

This sequence belongs to the snRNP Sm proteins family.

This Archaeoglobus fulgidus (strain ATCC 49558 / DSM 4304 / JCM 9628 / NBRC 100126 / VC-16) protein is Putative snRNP Sm-like protein.